The sequence spans 562 residues: Potassium-transporting ATPase potassium-binding subunit (562 aa).

Transmembrane regions (helical) follow at residues 5-25 (GILA…PLGG), 65-85 (AYLR…YAVF), 135-155 (IGIT…AMAF), 181-201 (LLLP…VPET), 257-277 (ILEI…AGHF), 283-303 (LAIV…YIVY), 331-351 (FGLP…TGAV), 358-378 (LMPL…IFGG), 381-401 (VGLL…GLMV), 422-442 (AAML…MALP), 486-506 (ISIG…MLAI), and 528-548 (FAFG…TFFP).

It belongs to the KdpA family. The system is composed of three essential subunits: KdpA, KdpB and KdpC.

The protein resides in the cell membrane. Functionally, part of the high-affinity ATP-driven potassium transport (or Kdp) system, which catalyzes the hydrolysis of ATP coupled with the electrogenic transport of potassium into the cytoplasm. This subunit binds the extracellular potassium ions and delivers the ions to the membrane domain of KdpB through an intramembrane tunnel. This is Potassium-transporting ATPase potassium-binding subunit from Alicyclobacillus acidocaldarius subsp. acidocaldarius (strain ATCC 27009 / DSM 446 / BCRC 14685 / JCM 5260 / KCTC 1825 / NBRC 15652 / NCIMB 11725 / NRRL B-14509 / 104-IA) (Bacillus acidocaldarius).